Reading from the N-terminus, the 225-residue chain is MVKVKFLGHAAFYIEGSKKILIDPFLTGNPQAVAKPEDFKDVDLILVTHAHGDHIGDAGEIAKISGAKIVAMYDIANYIAEKFKGVETVGMNYGPTEVDGVFIVQVPAWHSSSDGKYSIGNASGFIVKLDGKTIYHAGDTYVFKDMELFSELYGPIDVALLPIGGHFTMGVKEAAKAVELLKPRTVVPMHYNTWPPISADPEEFKKLVGDKAKVVVLKPGEELEL.

Belongs to the UPF0173 family.

This is UPF0173 metal-dependent hydrolase PYRAB05000 from Pyrococcus abyssi (strain GE5 / Orsay).